The sequence spans 215 residues: Protein GET1 (215 aa).

Residues 1–4 (MPSL) are Lumenal-facing. Residues 5-24 (LILIFTIEVAVELINTIGAA) form a helical membrane-spanning segment. The Cytoplasmic portion of the chain corresponds to 25–110 (TINNLLWRIF…NFDKYITGIR (86 aa)). Residues 72-104 (AKWAKLRRQHDKLLEQLEKKKAALDSTKGNFDK) adopt a coiled-coil conformation. A helical membrane pass occupies residues 111-131 (WVGTQGLRYFLPFWYAKVPMF). Over 132–155 (WLPYGWFPYYAEWLVSFPRAPMGS) the chain is Lumenal. The chain crosses the membrane as a helical span at residues 156-172 (VSIASWQLACTGFVVLI). The Cytoplasmic portion of the chain corresponds to 173–215 (KDAITALVVFVMGMRQSNVKQAVPVKAVSGEKASDEKEGKKEL).

It belongs to the WRB/GET1 family. In terms of assembly, interacts with GET3.

It localises to the endoplasmic reticulum membrane. Required for the post-translational delivery of tail-anchored (TA) proteins to the endoplasmic reticulum. Acts as a membrane receptor for soluble GET3, which recognizes and selectively binds the transmembrane domain of TA proteins in the cytosol. The sequence is that of Protein GET1 from Pyricularia oryzae (strain 70-15 / ATCC MYA-4617 / FGSC 8958) (Rice blast fungus).